We begin with the raw amino-acid sequence, 255 residues long: MNILSPIIIIIILIVLFYVMRMYNYQNKEPNKEPNKENMKQLNFRNRNNSNHNFIPKPLKKITNRNCHKIRKNILNNKFQTSDSIDLDNVIDLIYSKFVVRVDDFNFANKPTTNRKFDKHNSNDKILMKNIISNINEWNILFQKYSIESVYIDDIHISNILETENECILTVRAILIHGSQKYHIEMNFYGVKDRYDDFFTTKACNYNVVLFSIEHISSRQYHEKSTIDNPFMTMEQQLEYVKYIEKIHQDEINDN.

A signal peptide spans 1-22; that stretch reads MNILSPIIIIIILIVLFYVMRM.

This is an uncharacterized protein from Acanthamoeba polyphaga (Amoeba).